A 207-amino-acid polypeptide reads, in one-letter code: Ribosomal RNA small subunit methyltransferase G (207 aa).

Residues G73, L78, 124 to 125, and R139 each bind S-adenosyl-L-methionine; that span reads VE.

The protein belongs to the methyltransferase superfamily. RNA methyltransferase RsmG family.

It is found in the cytoplasm. It catalyses the reaction guanosine(527) in 16S rRNA + S-adenosyl-L-methionine = N(7)-methylguanosine(527) in 16S rRNA + S-adenosyl-L-homocysteine. Its function is as follows. Specifically methylates the N7 position of guanine in position 527 of 16S rRNA. In Salmonella choleraesuis (strain SC-B67), this protein is Ribosomal RNA small subunit methyltransferase G.